The primary structure comprises 282 residues: Pantothenate synthetase (282 aa).

ATP is bound at residue 30–37 (MGYLHEGH). His-37 serves as the catalytic Proton donor. Gln-61 is a binding site for (R)-pantoate. Residue Gln-61 coordinates beta-alanine. Position 147-150 (147-150 (GQKD)) interacts with ATP. Gln-153 lines the (R)-pantoate pocket. ATP-binding positions include Val-176 and 184–187 (MSSR).

This sequence belongs to the pantothenate synthetase family. Homodimer.

The protein localises to the cytoplasm. It carries out the reaction (R)-pantoate + beta-alanine + ATP = (R)-pantothenate + AMP + diphosphate + H(+). It functions in the pathway cofactor biosynthesis; (R)-pantothenate biosynthesis; (R)-pantothenate from (R)-pantoate and beta-alanine: step 1/1. In terms of biological role, catalyzes the condensation of pantoate with beta-alanine in an ATP-dependent reaction via a pantoyl-adenylate intermediate. The polypeptide is Pantothenate synthetase (Caldicellulosiruptor bescii (strain ATCC BAA-1888 / DSM 6725 / KCTC 15123 / Z-1320) (Anaerocellum thermophilum)).